The following is a 784-amino-acid chain: Armadillo repeat-containing X-linked protein 2 (784 aa).

The Mitochondrial intermembrane segment spans residues 1–6; the sequence is MSRARD. Mitochondrion outer membrane (MOM)-targeting sequence stretches follow at residues 1-6 and 26-40; these read MSRARD and KYTRGKDQKKKRLTK. The helical; Signal-anchor transmembrane segment at 7–27 threads the bilayer; it reads AGCVAAGIVIGASAWYCVYKY. Topologically, residues 28–784 are cytoplasmic; that stretch reads TRGKDQKKKR…VKVIKLVNKF (757 aa). Disordered regions lie at residues 328–353, 388–461, and 488–522; these read TSGGAAVPSGGAATPRAAASTQRTAS, HSGA…ELGM, and PESEEGESGWTDTESDSDSEPDVPQRGKGKRTIPM. Residues 396–418 are compositionally biased toward low complexity; sequence GTSGSSKTAATGKKAAPGAHTGA. Residues 488–508 are compositionally biased toward acidic residues; the sequence is PESEEGESGWTDTESDSDSEP. ARM repeat units follow at residues 528–568, 570–609, and 650–689; these read PYEI…NNAN, SCNQETIRKLGGLPIIANMINKTDPHIKEKALMAMNNLSE, and ITNDYQHLLVNSIANFFRLLSQGGGKIKVEILKILSNFAE.

This sequence belongs to the eutherian X-chromosome-specific Armcx family. Widely expressed in the adult nervous tissue, especially in the forebrain, including the cerebral cortex, hippocampus and thalamus.

The protein localises to the mitochondrion. It localises to the mitochondrion outer membrane. May regulate the dynamics and distribution of mitochondria in neural cells. The chain is Armadillo repeat-containing X-linked protein 2 (Armcx2) from Mus musculus (Mouse).